The chain runs to 215 residues: Phosphatidylserine decarboxylase proenzyme (215 aa).

The Schiff-base intermediate with substrate; via pyruvic acid role is filled by Ser-186. Ser-186 is modified (pyruvic acid (Ser); by autocatalysis).

This sequence belongs to the phosphatidylserine decarboxylase family. PSD-A subfamily. As to quaternary structure, heterodimer of a large membrane-associated beta subunit and a small pyruvoyl-containing alpha subunit. It depends on pyruvate as a cofactor. Post-translationally, is synthesized initially as an inactive proenzyme. Formation of the active enzyme involves a self-maturation process in which the active site pyruvoyl group is generated from an internal serine residue via an autocatalytic post-translational modification. Two non-identical subunits are generated from the proenzyme in this reaction, and the pyruvate is formed at the N-terminus of the alpha chain, which is derived from the carboxyl end of the proenzyme. The post-translation cleavage follows an unusual pathway, termed non-hydrolytic serinolysis, in which the side chain hydroxyl group of the serine supplies its oxygen atom to form the C-terminus of the beta chain, while the remainder of the serine residue undergoes an oxidative deamination to produce ammonia and the pyruvoyl prosthetic group on the alpha chain.

The protein localises to the cell membrane. It catalyses the reaction a 1,2-diacyl-sn-glycero-3-phospho-L-serine + H(+) = a 1,2-diacyl-sn-glycero-3-phosphoethanolamine + CO2. Its pathway is phospholipid metabolism; phosphatidylethanolamine biosynthesis; phosphatidylethanolamine from CDP-diacylglycerol: step 2/2. Functionally, catalyzes the formation of phosphatidylethanolamine (PtdEtn) from phosphatidylserine (PtdSer). The sequence is that of Phosphatidylserine decarboxylase proenzyme from Pelagibacter ubique (strain HTCC1062).